A 102-amino-acid chain; its full sequence is Integration host factor subunit beta (102 aa).

It belongs to the bacterial histone-like protein family. As to quaternary structure, heterodimer of an alpha and a beta chain.

This protein is one of the two subunits of integration host factor, a specific DNA-binding protein that functions in genetic recombination as well as in transcriptional and translational control. This chain is Integration host factor subunit beta, found in Marinomonas sp. (strain MWYL1).